The following is a 660-amino-acid chain: Phosphatidylinositol-3-phosphate phosphatase MTMR7 (660 aa).

A Myotubularin phosphatase domain is found at Gly126–Tyr504. The a 1,2-diacyl-sn-glycero-3-phospho-(1D-myo-inositol-3-phosphate) site is built by Asn250, Asn275, and Ile276. Residue Cys338 is the Phosphocysteine intermediate of the active site. Ser339, Asp340, Gly341, Trp342, Asp343, Arg344, and Arg384 together coordinate a 1,2-diacyl-sn-glycero-3-phospho-(1D-myo-inositol-3-phosphate). Residues Arg514–Val548 are a coiled coil. Positions Leu550–Ala660 are disordered. A compositionally biased stretch (polar residues) spans Ser566–Gln596. Thr578 is subject to Phosphothreonine. Residues Ala641–Asp653 are compositionally biased toward basic and acidic residues.

Belongs to the protein-tyrosine phosphatase family. Non-receptor class myotubularin subfamily. As to quaternary structure, heterodimer (via C-terminus) with MTMR9 (via coiled coil domain); the interaction enhances MTMR7 catalytic activity. Does not homodimerize. Interacts with RAB1B (in GDP-bound form). In terms of tissue distribution, highly expressed in brain (at protein level). Expressed at low levels in liver, kidney and testis.

It is found in the cytoplasm. Its subcellular location is the endomembrane system. The enzyme catalyses a 1,2-diacyl-sn-glycero-3-phospho-(1D-myo-inositol-3-phosphate) + H2O = a 1,2-diacyl-sn-glycero-3-phospho-(1D-myo-inositol) + phosphate. It carries out the reaction 1D-myo-inositol 1,3-bisphosphate + H2O = 1D-myo-inositol 1-phosphate + phosphate. With respect to regulation, interaction with MTMR9 increases phosphatase activity. In terms of biological role, lipid phosphatase that specifically dephosphorylates the D-3 position of phosphatidylinositol 3-phosphate (PtdIns(3)P) and inositol 1,3-bisphosphate (Ins(1,3)P2). This Mus musculus (Mouse) protein is Phosphatidylinositol-3-phosphate phosphatase MTMR7.